A 124-amino-acid chain; its full sequence is Large ribosomal subunit protein uL22 (124 aa).

It belongs to the universal ribosomal protein uL22 family. In terms of assembly, part of the 50S ribosomal subunit.

This protein binds specifically to 23S rRNA; its binding is stimulated by other ribosomal proteins, e.g. L4, L17, and L20. It is important during the early stages of 50S assembly. It makes multiple contacts with different domains of the 23S rRNA in the assembled 50S subunit and ribosome. In terms of biological role, the globular domain of the protein is located near the polypeptide exit tunnel on the outside of the subunit, while an extended beta-hairpin is found that lines the wall of the exit tunnel in the center of the 70S ribosome. The chain is Large ribosomal subunit protein uL22 from Buchnera aphidicola subsp. Cinara cedri (strain Cc).